A 166-amino-acid chain; its full sequence is Methylmalonyl-CoA epimerase, mitochondrial (166 aa).

A mitochondrion-targeting transit peptide spans 1-23; sequence MFKQLIKTTLTNSRSFSTNTGSG. The 130-residue stretch at 37-166 folds into the VOC domain; sequence KLNHVAIATP…NGVLVELEEK (130 aa). Residues His40, His112, and Glu162 each contribute to the Co(2+) site.

This sequence belongs to the methylmalonyl-CoA epimerase family.

The protein resides in the mitochondrion. The catalysed reaction is (R)-methylmalonyl-CoA = (S)-methylmalonyl-CoA. In terms of biological role, methylmalonyl-CoA epimerase involved in propionyl-CoA metabolism. This is Methylmalonyl-CoA epimerase, mitochondrial (mcee) from Dictyostelium discoideum (Social amoeba).